The following is a 588-amino-acid chain: Aspartate--tRNA ligase (588 aa).

Residue Glu-172 coordinates L-aspartate. The segment at 196 to 199 (QLFK) is aspartate. Arg-218 is a binding site for L-aspartate. ATP-binding positions include 218–220 (RDE) and Gln-227. His-449 is an L-aspartate binding site. Glu-483 provides a ligand contact to ATP. Arg-490 is an L-aspartate binding site. Position 535 to 538 (535 to 538 (GLDR)) interacts with ATP.

It belongs to the class-II aminoacyl-tRNA synthetase family. Type 1 subfamily. In terms of assembly, homodimer.

Its subcellular location is the cytoplasm. It carries out the reaction tRNA(Asp) + L-aspartate + ATP = L-aspartyl-tRNA(Asp) + AMP + diphosphate. Its function is as follows. Catalyzes the attachment of L-aspartate to tRNA(Asp) in a two-step reaction: L-aspartate is first activated by ATP to form Asp-AMP and then transferred to the acceptor end of tRNA(Asp). The protein is Aspartate--tRNA ligase of Haemophilus influenzae (strain ATCC 51907 / DSM 11121 / KW20 / Rd).